Consider the following 96-residue polypeptide: Small ribosomal subunit protein bS18 (96 aa).

Positions M1–R18 are enriched in basic residues. The disordered stretch occupies residues M1–Q21.

The protein belongs to the bacterial ribosomal protein bS18 family. Part of the 30S ribosomal subunit. Forms a tight heterodimer with protein bS6.

In terms of biological role, binds as a heterodimer with protein bS6 to the central domain of the 16S rRNA, where it helps stabilize the platform of the 30S subunit. The polypeptide is Small ribosomal subunit protein bS18 (Methylibium petroleiphilum (strain ATCC BAA-1232 / LMG 22953 / PM1)).